A 490-amino-acid chain; its full sequence is MSTRVRYAPSPTGLQHIGGIRTALFNYFFAKSCGGKFLLRIEDTDQSRYSPEAENDLYSSLKWLGISFDEGPVVGGDYAPYVQSQRSAIYKQYAKYLIESGHAYYCYCSPERLERIKKIQNINKMPPGYDRHCRNLSNEEVENALIKKIKPVVRFKIPLEGDTSFDDILLGRITWANKDISPDPVILKSDGLPTYHLANVVDDYLMKITHVLRAQEWVSSGPLHVLLYKAFKWKPPIYCHLPMVMGNDGQKLSKRHGSTALRQFIEDGYLPEAIINYVTLLGWSYDDKREFFSKNDLEQFFSIEKINKSPAIFDYHKLDFFNSYYIREKKDEDLFNLLLPFFQKKGYVSKPSTLEENQKLKLLIPLIKSRIKKLSDALNMTKFFYEDIKSWNLDEFLSRKKTAKEVCSILELIKPILEGFEKRSSEENDKIFYDFAESNGFKLGEILLPIRIAALGSKVSPPLFDSLKLIGKSKVFERIKLAQEFLRINE.

The short motif at 9 to 19 is the 'HIGH' region element; it reads PSPTGLQHIGG. A 'KMSKS' region motif is present at residues 251–255; the sequence is KLSKR. Residue K254 coordinates ATP.

It belongs to the class-I aminoacyl-tRNA synthetase family. Glutamate--tRNA ligase type 1 subfamily. Monomer.

The protein resides in the cytoplasm. It carries out the reaction tRNA(Glu) + L-glutamate + ATP = L-glutamyl-tRNA(Glu) + AMP + diphosphate. Catalyzes the attachment of glutamate to tRNA(Glu) in a two-step reaction: glutamate is first activated by ATP to form Glu-AMP and then transferred to the acceptor end of tRNA(Glu). The sequence is that of Glutamate--tRNA ligase from Borreliella burgdorferi (strain ATCC 35210 / DSM 4680 / CIP 102532 / B31) (Borrelia burgdorferi).